Here is a 452-residue protein sequence, read N- to C-terminus: Dimethyladenosine transferase 2, mitochondrial (452 aa).

Residues isoleucine 46, glutamate 99, and aspartate 125 each contribute to the S-adenosyl-L-methionine site. Residues 408–452 (ANDEPNLEDGVTLPEEDDAEADEIIEEESPVPATTPVKRRRKASS) are disordered. The span at 421 to 436 (PEEDDAEADEIIEEES) shows a compositional bias: acidic residues.

It belongs to the class I-like SAM-binding methyltransferase superfamily. rRNA adenine N(6)-methyltransferase family. KsgA subfamily.

It is found in the mitochondrion. Functionally, probable S-adenosyl-L-methionine-dependent methyltransferase which specifically dimethylates mitochondrial 12S rRNA at the conserved stem loop. Also required for basal transcription of mitochondrial DNA. Also regulates mitochondrial DNA copy number. Stimulates transcription independently of the methyltransferase activity. This Drosophila melanogaster (Fruit fly) protein is Dimethyladenosine transferase 2, mitochondrial (mtTFB2).